Here is a 317-residue protein sequence, read N- to C-terminus: 4-diphosphocytidyl-2-C-methyl-D-erythritol kinase (317 aa).

Lys-11 is an active-site residue. ATP is bound at residue 99–109; that stretch reads PVAAGLAGGST. Asp-141 is an active-site residue.

Belongs to the GHMP kinase family. IspE subfamily.

It catalyses the reaction 4-CDP-2-C-methyl-D-erythritol + ATP = 4-CDP-2-C-methyl-D-erythritol 2-phosphate + ADP + H(+). It participates in isoprenoid biosynthesis; isopentenyl diphosphate biosynthesis via DXP pathway; isopentenyl diphosphate from 1-deoxy-D-xylulose 5-phosphate: step 3/6. Functionally, catalyzes the phosphorylation of the position 2 hydroxy group of 4-diphosphocytidyl-2C-methyl-D-erythritol. This Trichormus variabilis (strain ATCC 29413 / PCC 7937) (Anabaena variabilis) protein is 4-diphosphocytidyl-2-C-methyl-D-erythritol kinase.